The sequence spans 287 residues: Ribosomal RNA small subunit methyltransferase I (287 aa).

It belongs to the methyltransferase superfamily. RsmI family.

Its subcellular location is the cytoplasm. The enzyme catalyses cytidine(1402) in 16S rRNA + S-adenosyl-L-methionine = 2'-O-methylcytidine(1402) in 16S rRNA + S-adenosyl-L-homocysteine + H(+). Catalyzes the 2'-O-methylation of the ribose of cytidine 1402 (C1402) in 16S rRNA. This Streptococcus pyogenes serotype M6 (strain ATCC BAA-946 / MGAS10394) protein is Ribosomal RNA small subunit methyltransferase I.